The following is a 181-amino-acid chain: MDIIRQLEAEQAAKIEAKRKLPEFQPGDTVRVQVRVTEGTRTRVQAYEGVVIARAGSGFQENFTVRKISYGEGVERVFPVFSPMVEGVEIVRRGKVRRAKLYYLRDRRGKSARISENTGVRARKLNDEERDALNAEKARIEAEKVAAAQALAAETAAKEAAEKKAAAEAEAAKAAEATPAE.

Positions 162–173 (EKKAAAEAEAAK) are enriched in basic and acidic residues. The interval 162–181 (EKKAAAEAEAAKAAEATPAE) is disordered.

Belongs to the bacterial ribosomal protein bL19 family.

This protein is located at the 30S-50S ribosomal subunit interface and may play a role in the structure and function of the aminoacyl-tRNA binding site. This is Large ribosomal subunit protein bL19 from Mesorhizobium japonicum (strain LMG 29417 / CECT 9101 / MAFF 303099) (Mesorhizobium loti (strain MAFF 303099)).